The primary structure comprises 262 residues: Type III pantothenate kinase (262 aa).

6-13 (DVGNTNTV) provides a ligand contact to ATP. Residues tyrosine 101 and 108–111 (GADR) each bind substrate. The active-site Proton acceptor is the aspartate 110. Aspartate 130 provides a ligand contact to K(+). Position 133 (threonine 133) interacts with ATP. Threonine 186 contributes to the substrate binding site.

The protein belongs to the type III pantothenate kinase family. As to quaternary structure, homodimer. The cofactor is NH4(+). Requires K(+) as cofactor.

The protein resides in the cytoplasm. The catalysed reaction is (R)-pantothenate + ATP = (R)-4'-phosphopantothenate + ADP + H(+). It participates in cofactor biosynthesis; coenzyme A biosynthesis; CoA from (R)-pantothenate: step 1/5. In terms of biological role, catalyzes the phosphorylation of pantothenate (Pan), the first step in CoA biosynthesis. The protein is Type III pantothenate kinase of Desulforapulum autotrophicum (strain ATCC 43914 / DSM 3382 / VKM B-1955 / HRM2) (Desulfobacterium autotrophicum).